The sequence spans 358 residues: Mannonate dehydratase (358 aa).

It belongs to the mannonate dehydratase family. It depends on Fe(2+) as a cofactor. Mn(2+) is required as a cofactor.

It catalyses the reaction D-mannonate = 2-dehydro-3-deoxy-D-gluconate + H2O. It participates in carbohydrate metabolism; pentose and glucuronate interconversion. Functionally, catalyzes the dehydration of D-mannonate. The sequence is that of Mannonate dehydratase from Shouchella clausii (strain KSM-K16) (Alkalihalobacillus clausii).